A 305-amino-acid polypeptide reads, in one-letter code: Putative lipid kinase SAS0691 (305 aa).

Residues 3 to 139 (NKYTHGVLFY…YDVIKINNQY (137 aa)) enclose the DAGKc domain. Residues serine 44, 74–80 (GDGTVNE), and threonine 101 each bind ATP. Residues serine 220, aspartate 223, and glutamate 225 each contribute to the Mg(2+) site. The active-site Proton acceptor is the glutamate 281.

It belongs to the diacylglycerol/lipid kinase family. The cofactor is Mg(2+).

Functionally, may catalyze the ATP-dependent phosphorylation of lipids other than diacylglycerol (DAG). In Staphylococcus aureus (strain MSSA476), this protein is Putative lipid kinase SAS0691.